Reading from the N-terminus, the 846-residue chain is Protein IRS1 (846 aa).

4 disordered regions span residues 1 to 82, 366 to 385, 606 to 626, and 714 to 846; these read MAQR…NFWH, TGTA…ETEA, WLME…ATMP, and QVIP…HVHH. A compositionally biased stretch (gly residues) spans 16-25; the sequence is RGRGAGGPSG. The span at 26 to 56 shows a compositional bias: low complexity; the sequence is VGSSPPSSCVPMGAPSTAGTGASAAATTTPG. Residues 722-732 show a composition bias toward acidic residues; that stretch reads EPEDDDEDPTY. Residues 832–846 show a composition bias toward basic residues; sequence RPKKCQTHAPHHVHH.

The protein belongs to the herpesviridae US22 family. In terms of assembly, interacts (via N-terminus) with the viral DNA polymerase accessory subunit UL44. Interacts (via C-terminus) with host EIF2AK2/PKR.

The protein localises to the virion. It localises to the host cytoplasm. It is found in the host nucleus. Inhibits the establishment of the antiviral state in the infected cell. Prevents the phosphorylation of the host eukaryotic translation initiation factor eIF-2alpha and thus the shutoff of viral and cellular protein synthesis by directly interacting with EIF2AK2/PKR. May also participate in viral DNA replication by interacting with the DNA polymerase accessory protein and the lytic origin of replication, oriLyt. In Homo sapiens (Human), this protein is Protein IRS1 (IRS1).